The sequence spans 535 residues: Peptide chain release factor 3 (535 aa).

The 270-residue stretch at 8-277 folds into the tr-type G domain; sequence KRRRTFAIIS…TLVDLAPPPG (270 aa). GTP contacts are provided by residues 17-24, 85-89, and 139-142; these read SHPDAGKT, DTPGH, and NKLD.

This sequence belongs to the TRAFAC class translation factor GTPase superfamily. Classic translation factor GTPase family. PrfC subfamily.

The protein resides in the cytoplasm. In terms of biological role, increases the formation of ribosomal termination complexes and stimulates activities of RF-1 and RF-2. It binds guanine nucleotides and has strong preference for UGA stop codons. It may interact directly with the ribosome. The stimulation of RF-1 and RF-2 is significantly reduced by GTP and GDP, but not by GMP. The protein is Peptide chain release factor 3 of Nitrosomonas eutropha (strain DSM 101675 / C91 / Nm57).